A 131-amino-acid polypeptide reads, in one-letter code: MISATKIRSCLAACVLAAFGATGALADKATIPSESPFAAAEVADGAIVVDIAKMKYETPELHVKVGDTVTWINREAMPHNVHFVAGVLGEAALKGPMMKKEQAYSLTFTEAGTYDYHCTPHPFMRGKVVVE.

The first 26 residues, 1 to 26 (MISATKIRSCLAACVLAAFGATGALA), serve as a signal peptide directing secretion. The region spanning 27–131 (DKATIPSESP…PFMRGKVVVE (105 aa)) is the Plastocyanin-like domain. 4 residues coordinate Cu cation: histidine 79, cysteine 118, histidine 121, and methionine 124.

Requires Cu cation as cofactor.

Its subcellular location is the periplasm. It participates in one-carbon metabolism; methylamine degradation. In terms of biological role, primary acceptor of electrons from methylamine dehydrogenase. Passes those electrons on either a soluble cytochrome c or to pseudoazurin. In Paracoccus denitrificans, this protein is Amicyanin (mauC).